The chain runs to 309 residues: Aspartate carbamoyltransferase catalytic subunit (309 aa).

2 residues coordinate carbamoyl phosphate: Arg49 and Thr50. Lys77 lines the L-aspartate pocket. Residues Arg99, His127, and Gln130 each contribute to the carbamoyl phosphate site. L-aspartate-binding residues include Arg160 and Arg211. Carbamoyl phosphate is bound by residues Ala252 and Pro253.

Belongs to the aspartate/ornithine carbamoyltransferase superfamily. ATCase family. In terms of assembly, heterododecamer (2C3:3R2) of six catalytic PyrB chains organized as two trimers (C3), and six regulatory PyrI chains organized as three dimers (R2).

The catalysed reaction is carbamoyl phosphate + L-aspartate = N-carbamoyl-L-aspartate + phosphate + H(+). It participates in pyrimidine metabolism; UMP biosynthesis via de novo pathway; (S)-dihydroorotate from bicarbonate: step 2/3. Functionally, catalyzes the condensation of carbamoyl phosphate and aspartate to form carbamoyl aspartate and inorganic phosphate, the committed step in the de novo pyrimidine nucleotide biosynthesis pathway. The protein is Aspartate carbamoyltransferase catalytic subunit of Geobacillus sp. (strain WCH70).